The chain runs to 63 residues: Large ribosomal subunit protein uL29 (63 aa).

The protein belongs to the universal ribosomal protein uL29 family.

This chain is Large ribosomal subunit protein uL29, found in Mannheimia succiniciproducens (strain KCTC 0769BP / MBEL55E).